Consider the following 102-residue polypeptide: EPIDERMAL PATTERNING FACTOR-like protein 9 (102 aa).

An N-terminal signal peptide occupies residues 1 to 31 (MKHEMMNIKPRCITIFFLLFALLLGNYVVQA). 3 cysteine pairs are disulfide-bonded: Cys65-Cys98, Cys70-Cys77, and Cys73-Cys100.

Belongs to the plant cysteine rich small secretory peptide family. Epidermal patterning factor subfamily. As to quaternary structure, interacts with ERECTA and TMM. In terms of tissue distribution, expressed in immature organs, including leaves, stems and flower buds, but not in roots, shoot apical meristem and petals. Detected in the mesophyll tissues but not in the epidermal tissues where stomata develop.

The protein resides in the secreted. The protein localises to the extracellular space. Its subcellular location is the apoplast. In terms of biological role, positively regulates stomatal density and patterning. Acts by competing with EPF2 (AC Q8LC53) for the same receptors, ERECTA (AC Q42371) and TMM (AC Q9SSD1). Not cleaved by the protease CRSP (AC Q9LNU1). The sequence is that of EPIDERMAL PATTERNING FACTOR-like protein 9 from Arabidopsis thaliana (Mouse-ear cress).